The sequence spans 367 residues: Glutamate 5-kinase (367 aa).

K10 is an ATP binding site. 3 residues coordinate substrate: S50, D137, and N149. ATP is bound by residues 169 to 170 (TD) and 211 to 217 (TGGMSTK). In terms of domain architecture, PUA spans 275 to 353 (AGEITVDDGA…QQIAEILGYE (79 aa)).

It belongs to the glutamate 5-kinase family.

The protein localises to the cytoplasm. It catalyses the reaction L-glutamate + ATP = L-glutamyl 5-phosphate + ADP. It participates in amino-acid biosynthesis; L-proline biosynthesis; L-glutamate 5-semialdehyde from L-glutamate: step 1/2. Catalyzes the transfer of a phosphate group to glutamate to form L-glutamate 5-phosphate. In Pectobacterium atrosepticum (strain SCRI 1043 / ATCC BAA-672) (Erwinia carotovora subsp. atroseptica), this protein is Glutamate 5-kinase.